The following is a 227-amino-acid chain: Cytochrome c oxidase subunit 2 (227 aa).

At 1 to 26 (MATWSNFNLQNSASPLMEQIIFFHDH) the chain is on the mitochondrial intermembrane side. The helical transmembrane segment at 27-51 (TLVILIMITILVGYLMISLFFNSYI) threads the bilayer. Residues 52 to 62 (NRFLLEGQMIE) are Mitochondrial matrix-facing. The chain crosses the membrane as a helical span at residues 63 to 81 (LIWTILPAITLIFIALPSL). Residues 82 to 227 (RLLYLLDELN…NFINWINNYS (146 aa)) lie on the Mitochondrial intermembrane side of the membrane. Residues His-161, Cys-196, Glu-198, Cys-200, His-204, and Met-207 each contribute to the Cu cation site. Glu-198 is a Mg(2+) binding site.

It belongs to the cytochrome c oxidase subunit 2 family. Component of the cytochrome c oxidase (complex IV, CIV), a multisubunit enzyme composed of a catalytic core of 3 subunits and several supernumerary subunits. The complex exists as a monomer or a dimer and forms supercomplexes (SCs) in the inner mitochondrial membrane with ubiquinol-cytochrome c oxidoreductase (cytochrome b-c1 complex, complex III, CIII). Cu cation serves as cofactor.

It localises to the mitochondrion inner membrane. The catalysed reaction is 4 Fe(II)-[cytochrome c] + O2 + 8 H(+)(in) = 4 Fe(III)-[cytochrome c] + 2 H2O + 4 H(+)(out). Functionally, component of the cytochrome c oxidase, the last enzyme in the mitochondrial electron transport chain which drives oxidative phosphorylation. The respiratory chain contains 3 multisubunit complexes succinate dehydrogenase (complex II, CII), ubiquinol-cytochrome c oxidoreductase (cytochrome b-c1 complex, complex III, CIII) and cytochrome c oxidase (complex IV, CIV), that cooperate to transfer electrons derived from NADH and succinate to molecular oxygen, creating an electrochemical gradient over the inner membrane that drives transmembrane transport and the ATP synthase. Cytochrome c oxidase is the component of the respiratory chain that catalyzes the reduction of oxygen to water. Electrons originating from reduced cytochrome c in the intermembrane space (IMS) are transferred via the dinuclear copper A center (CU(A)) of subunit 2 and heme A of subunit 1 to the active site in subunit 1, a binuclear center (BNC) formed by heme A3 and copper B (CU(B)). The BNC reduces molecular oxygen to 2 water molecules using 4 electrons from cytochrome c in the IMS and 4 protons from the mitochondrial matrix. This Choristoneura rosaceana (Oblique banded leafroller) protein is Cytochrome c oxidase subunit 2 (COII).